Here is a 124-residue protein sequence, read N- to C-terminus: Type-4 ice-structuring protein (124 aa).

Residues 1-20 (MKFSLIAAVALLALAQGSFA) form the signal peptide. Position 21 is a pyrrolidone carboxylic acid (glutamine 21).

Belongs to the apolipoprotein A1/A4/E family.

It is found in the secreted. Antifreeze proteins lower the blood freezing point. This is Type-4 ice-structuring protein from Paralichthys olivaceus (Bastard halibut).